Reading from the N-terminus, the 595-residue chain is GPI mannosyltransferase 3 (595 aa).

Transmembrane regions (helical) follow at residues 58–78 (YAFPMLFEMSYYVAWILGVAT), 85–105 (LAHATALCGAVVPSGAAGVAA), 128–148 (GPRVVMAAVAACGEFYSVLLV), 185–207 (FFATRTFINSFEMTLTAVALYHW), 212–232 (GLDVGSLGFSASLAVAAFACL), 235–255 (PTNVLIWAVLGLFLVLNLVRS), 260–280 (LLLTLVAKVAAAGALAVCANI), 289–309 (GVLLPLLRFIEFNVTTPLAAF), 319–339 (LLQSVPLIVGYALPFFVGALL), and 413–433 (VQSLLYVLPVLSITAALVLNT).

The protein belongs to the glycosyltransferase 22 family. PIGB subfamily.

The protein resides in the endoplasmic reticulum membrane. The protein operates within glycolipid biosynthesis; glycosylphosphatidylinositol-anchor biosynthesis. Mannosyltransferase involved in glycosylphosphatidylinositol-anchor biosynthesis. Transfers the third mannose to Man2-GlcN-acyl-PI during GPI precursor assembly. The chain is GPI mannosyltransferase 3 (GPI10) from Eremothecium gossypii (strain ATCC 10895 / CBS 109.51 / FGSC 9923 / NRRL Y-1056) (Yeast).